A 419-amino-acid polypeptide reads, in one-letter code: Gamma-glutamyl phosphate reductase (419 aa).

Belongs to the gamma-glutamyl phosphate reductase family.

The protein localises to the cytoplasm. It catalyses the reaction L-glutamate 5-semialdehyde + phosphate + NADP(+) = L-glutamyl 5-phosphate + NADPH + H(+). Its pathway is amino-acid biosynthesis; L-proline biosynthesis; L-glutamate 5-semialdehyde from L-glutamate: step 2/2. Catalyzes the NADPH-dependent reduction of L-glutamate 5-phosphate into L-glutamate 5-semialdehyde and phosphate. The product spontaneously undergoes cyclization to form 1-pyrroline-5-carboxylate. This chain is Gamma-glutamyl phosphate reductase, found in Nitratidesulfovibrio vulgaris (strain ATCC 29579 / DSM 644 / CCUG 34227 / NCIMB 8303 / VKM B-1760 / Hildenborough) (Desulfovibrio vulgaris).